We begin with the raw amino-acid sequence, 179 residues long: Cytochrome b6-f complex iron-sulfur subunit (179 aa).

A helical membrane pass occupies residues 21–43 (LLTFGTVTGVALGALYPVVNYFI). The Rieske domain maps to 61–162 (GNDIIVSEFL…ANVSDDKLVF (102 aa)). 4 residues coordinate [2Fe-2S] cluster: Cys-108, His-110, Cys-126, and His-129. Residues Cys-113 and Cys-128 are joined by a disulfide bond.

Belongs to the Rieske iron-sulfur protein family. As to quaternary structure, the 4 large subunits of the cytochrome b6-f complex are cytochrome b6, subunit IV (17 kDa polypeptide, PetD), cytochrome f and the Rieske protein, while the 4 small subunits are PetG, PetL, PetM and PetN. The complex functions as a dimer. [2Fe-2S] cluster is required as a cofactor.

The protein resides in the cellular thylakoid membrane. It carries out the reaction 2 oxidized [plastocyanin] + a plastoquinol + 2 H(+)(in) = 2 reduced [plastocyanin] + a plastoquinone + 4 H(+)(out). Its function is as follows. Component of the cytochrome b6-f complex, which mediates electron transfer between photosystem II (PSII) and photosystem I (PSI), cyclic electron flow around PSI, and state transitions. This chain is Cytochrome b6-f complex iron-sulfur subunit, found in Trichodesmium erythraeum (strain IMS101).